Reading from the N-terminus, the 225-residue chain is Uridylate kinase (225 aa).

ATP is bound at residue 9 to 10 (GS). Residue glycine 44 coordinates UMP. The ATP site is built by glycine 45 and arginine 49. UMP is bound by residues aspartate 66 and 114-120 (THPGHTT). The ATP site is built by threonine 140, asparagine 141, tyrosine 146, and aspartate 149.

The protein belongs to the UMP kinase family. As to quaternary structure, homohexamer.

Its subcellular location is the cytoplasm. The enzyme catalyses UMP + ATP = UDP + ADP. Its pathway is pyrimidine metabolism; CTP biosynthesis via de novo pathway; UDP from UMP (UMPK route): step 1/1. Inhibited by UTP. In terms of biological role, catalyzes the reversible phosphorylation of UMP to UDP. The chain is Uridylate kinase from Thermococcus kodakarensis (strain ATCC BAA-918 / JCM 12380 / KOD1) (Pyrococcus kodakaraensis (strain KOD1)).